A 271-amino-acid polypeptide reads, in one-letter code: MPELPEVEITRRGIDTHLAGRVITQISIRNPVLRWPISAGLIALLPGQRINAIARRAKYLLFACSRGTLIMHLGMSGNLRVLPESTPPQLHDHFDLQVDNGMMLRFRDPRRFGAILWWDGDIRQHPLLQKLGPEPLSDDFDGQFLYTKTRGRNASIKEVLMNQHIVVGIGNIYANEALFQAGISPLAAAGSLNTMQCERLVDAVKATLLRAIKAGGSSLRDFTDCEGSPGYFQQQYWVYGRAGQSCRQCGELVSKTRQGQRSTFFCARCQH.

P2 acts as the Schiff-base intermediate with DNA in catalysis. The active-site Proton donor is E3. K58 acts as the Proton donor; for beta-elimination activity in catalysis. Residues H91, R110, and R152 each contribute to the DNA site. The segment at 237 to 271 adopts an FPG-type zinc-finger fold; sequence WVYGRAGQSCRQCGELVSKTRQGQRSTFFCARCQH. R261 serves as the catalytic Proton donor; for delta-elimination activity.

It belongs to the FPG family. Monomer. Zn(2+) serves as cofactor.

The catalysed reaction is Hydrolysis of DNA containing ring-opened 7-methylguanine residues, releasing 2,6-diamino-4-hydroxy-5-(N-methyl)formamidopyrimidine.. The enzyme catalyses 2'-deoxyribonucleotide-(2'-deoxyribose 5'-phosphate)-2'-deoxyribonucleotide-DNA = a 3'-end 2'-deoxyribonucleotide-(2,3-dehydro-2,3-deoxyribose 5'-phosphate)-DNA + a 5'-end 5'-phospho-2'-deoxyribonucleoside-DNA + H(+). Involved in base excision repair of DNA damaged by oxidation or by mutagenic agents. Acts as a DNA glycosylase that recognizes and removes damaged bases. Has a preference for oxidized purines, such as 7,8-dihydro-8-oxoguanine (8-oxoG). Has AP (apurinic/apyrimidinic) lyase activity and introduces nicks in the DNA strand. Cleaves the DNA backbone by beta-delta elimination to generate a single-strand break at the site of the removed base with both 3'- and 5'-phosphates. In Nitrosomonas europaea (strain ATCC 19718 / CIP 103999 / KCTC 2705 / NBRC 14298), this protein is Formamidopyrimidine-DNA glycosylase.